The primary structure comprises 305 residues: Carbonic anhydrase 5A, mitochondrial (305 aa).

Residues 1 to 38 constitute a mitochondrion transit peptide; the sequence is MLGRNTWKTSAFSFLVEQMWAPLWSRSMRPGRWCSQRS. The region spanning 39 to 296 is the Alpha-carbonic anhydrase domain; sequence CAWQTSNNTL…LMNRKVWASF (258 aa). Zn(2+)-binding residues include His130, His132, and His155.

The protein belongs to the alpha-carbonic anhydrase family. It depends on Zn(2+) as a cofactor.

It localises to the mitochondrion. It carries out the reaction hydrogencarbonate + H(+) = CO2 + H2O. With respect to regulation, activated by L- and D-histidine. Activated by L- and D-phenylalanine. Activated by L-adrenaline. Inhibited by coumarins, sulfonamide derivatives such as acetazolamide and Foscarnet (phosphonoformate trisodium salt). Activated by histamine. Functionally, mitochondrial carbonic anhydrase that catalyzes the reversible conversion of carbon dioxide to bicarbonate/HCO3. Mitochondria are impermeable to HCO3, and thus this intramitochondrial carbonic anhydrase is pivotal in providing HCO3 for multiple mitochondrial enzymes that catalyze the formation of essential metabolites of intermediary metabolism in the urea and Krebs cycles. This is Carbonic anhydrase 5A, mitochondrial from Homo sapiens (Human).